The chain runs to 317 residues: MTTALDQLKQYTTVVADTGDFQQLAQYKPQDATTNPSLILKAVQKDAYKPILEKTVRDHRNESTDFIIDRLLIAFGTEILKLIPGRVSTEVDARLSFDTQRSIEKGRELIKLYEAAGIGRERILIKLASTWEGIRAAEVLQKEGIKCNMTLLFSLVQAAACAEAGAQLISPFVGRIYDWYKKQAGAEWNEARDGGANDPGVQSVRRIYTYYKTFGYKTEVMGASFRTTSQITELAGCDLLTISPDLLQKLQESNETVARKLSPETLQDKPAERVAIDEASFRFQLNDEAMATEKLAEGIRVFAADAVKLEKLIDALR.

The active-site Schiff-base intermediate with substrate is the Lys126.

This sequence belongs to the transaldolase family. Type 1 subfamily. As to quaternary structure, homodimer.

The protein resides in the cytoplasm. The catalysed reaction is D-sedoheptulose 7-phosphate + D-glyceraldehyde 3-phosphate = D-erythrose 4-phosphate + beta-D-fructose 6-phosphate. The protein operates within carbohydrate degradation; pentose phosphate pathway; D-glyceraldehyde 3-phosphate and beta-D-fructose 6-phosphate from D-ribose 5-phosphate and D-xylulose 5-phosphate (non-oxidative stage): step 2/3. Transaldolase is important for the balance of metabolites in the pentose-phosphate pathway. The polypeptide is Transaldolase (Burkholderia orbicola (strain AU 1054)).